The primary structure comprises 375 residues: Homoserine O-succinyltransferase (375 aa).

The region spanning 48–358 (NAVLVCHALS…PAGHDSFLLD (311 aa)) is the AB hydrolase-1 domain. Ser-154 functions as the Nucleophile in the catalytic mechanism. Arg-224 is a substrate binding site. Residues Asp-319 and His-352 contribute to the active site. Asp-353 provides a ligand contact to substrate.

Belongs to the AB hydrolase superfamily. MetX family. In terms of assembly, homodimer.

It localises to the cytoplasm. It carries out the reaction L-homoserine + succinyl-CoA = O-succinyl-L-homoserine + CoA. It participates in amino-acid biosynthesis; L-methionine biosynthesis via de novo pathway; O-succinyl-L-homoserine from L-homoserine: step 1/1. In terms of biological role, transfers a succinyl group from succinyl-CoA to L-homoserine, forming succinyl-L-homoserine. This Azoarcus sp. (strain BH72) protein is Homoserine O-succinyltransferase.